A 444-amino-acid chain; its full sequence is DNA repair protein RadA (444 aa).

The C4-type zinc-finger motif lies at 10 to 27; that stretch reads CQECGYKSVKWLGKCPSC. An ATP-binding site is contributed by 91–98; the sequence is GEPGIGKS. The RadA KNRFG motif motif lies at 247–251; sequence KNRFG. Residues 345–444 are lon-protease-like; that stretch reads DVFVNVAGGM…HIQEAIEVLF (100 aa).

Belongs to the RecA family. RadA subfamily.

DNA-dependent ATPase involved in processing of recombination intermediates, plays a role in repairing DNA breaks. Stimulates the branch migration of RecA-mediated strand transfer reactions, allowing the 3' invading strand to extend heteroduplex DNA faster. Binds ssDNA in the presence of ADP but not other nucleotides, has ATPase activity that is stimulated by ssDNA and various branched DNA structures, but inhibited by SSB. Does not have RecA's homology-searching function. The sequence is that of DNA repair protein RadA from Aquifex aeolicus (strain VF5).